The chain runs to 321 residues: MSAEQKYFENAQNVHFTLADGSKIPGLGLGTWRSEPNQTKNAVKTALQYGYRHIDAAAIYGNEDEVGDGIKESGVPRKDIWVTSKLWCNAHAPEAVPKALEKTLKDLKLDYLDEYLIHWPVSFKTGEDKFPKDKDGNLIYEKNPIEETWKAMEKLLETGKVRHIGLSNFNDTNLERILKVAKVKPAVHQMELHPFLPQTEFVEKHKKLGIHVTAYSPFGNQNTIYESKIPKLIEHETIQKIAKSKGEGVTGATIAVSWAITRGTSVIPKSVNEQRIKSNFKYIPLTKEDMDEINSIGIRARFNQATFSNEPVFAGLEDGRT.

Residue Tyr-60 is the Proton donor of the active site. Residue His-118 coordinates substrate.

It belongs to the aldo/keto reductase family.

This is an uncharacterized protein from Schizosaccharomyces pombe (strain 972 / ATCC 24843) (Fission yeast).